A 383-amino-acid chain; its full sequence is UDP-N-acetylenolpyruvoylglucosamine reductase (383 aa).

The segment covering 1–13 (MRTRRDVPADRSG) has biased composition (basic and acidic residues). A disordered region spans residues 1–26 (MRTRRDVPADRSGRSRVSRHPGLSVP). An FAD-binding PCMH-type domain is found at 49-215 (LGGPATRLLT…LRVRFELENA (167 aa)). Arginine 192 is a catalytic residue. Serine 271 functions as the Proton donor in the catalytic mechanism. Glutamate 375 is a catalytic residue.

The protein belongs to the MurB family. The cofactor is FAD.

The protein resides in the cytoplasm. It carries out the reaction UDP-N-acetyl-alpha-D-muramate + NADP(+) = UDP-N-acetyl-3-O-(1-carboxyvinyl)-alpha-D-glucosamine + NADPH + H(+). Its pathway is cell wall biogenesis; peptidoglycan biosynthesis. Functionally, cell wall formation. The polypeptide is UDP-N-acetylenolpyruvoylglucosamine reductase (Streptomyces coelicolor (strain ATCC BAA-471 / A3(2) / M145)).